A 577-amino-acid polypeptide reads, in one-letter code: Arginine--tRNA ligase (577 aa).

Residues 122-132 (PNVAKEMHVGH) carry the 'HIGH' region motif.

The protein belongs to the class-I aminoacyl-tRNA synthetase family. In terms of assembly, monomer.

It is found in the cytoplasm. It carries out the reaction tRNA(Arg) + L-arginine + ATP = L-arginyl-tRNA(Arg) + AMP + diphosphate. The polypeptide is Arginine--tRNA ligase (Aliivibrio fischeri (strain MJ11) (Vibrio fischeri)).